A 457-amino-acid polypeptide reads, in one-letter code: Oxysterol-binding protein-related protein 3C (457 aa).

Disordered regions lie at residues 37-61 and 363-393; these read NEGV…KGRW and QGDL…KGQK. Basic and acidic residues-rich tracts occupy residues 47–61 and 370–391; these read GGKE…KGRW and GSEK…ETKG.

Belongs to the OSBP family. Expressed in roots, leaves, stems and flowers.

Its function is as follows. May be involved in the transport of sterols. The protein is Oxysterol-binding protein-related protein 3C (ORP3C) of Arabidopsis thaliana (Mouse-ear cress).